The sequence spans 83 residues: Putative beta-neurotoxin RjAa10f (83 aa).

Positions 1-18 are cleaved as a signal peptide; that stretch reads MKILIFIIASFMLIGVWC. One can recognise an LCN-type CS-alpha/beta domain in the interval 19–82; that stretch reads KEGYPMGRDG…VWDPNNNKCV (64 aa). Disulfide bonds link cysteine 29/cysteine 81, cysteine 33/cysteine 55, cysteine 40/cysteine 62, and cysteine 44/cysteine 64.

This sequence belongs to the long (4 C-C) scorpion toxin superfamily. Sodium channel inhibitor family. Beta subfamily. As to expression, expressed by the venom gland.

The protein localises to the secreted. Its function is as follows. Beta toxins bind voltage-independently at site-4 of sodium channels (Nav) and shift the voltage of activation toward more negative potentials thereby affecting sodium channel activation and promoting spontaneous and repetitive firing. The polypeptide is Putative beta-neurotoxin RjAa10f (Rhopalurus junceus (Caribbean blue scorpion)).